The following is a 54-amino-acid chain: MSTATFVDIIIAILLPPLGVFLRFGCGVEFWICLVLTLLGYIPGIIYAIYVLTK.

2 helical membrane-spanning segments follow: residues 2-22 and 32-52; these read STAT…GVFL and ICLV…IYVL.

This sequence belongs to the UPF0057 (PMP3) family.

It localises to the membrane. The sequence is that of Hydrophobic protein RCI2A (RCI2A) from Arabidopsis thaliana (Mouse-ear cress).